The sequence spans 1796 residues: U3 small nucleolar RNA-associated protein 10 (1796 aa).

HEAT repeat units lie at residues 586 to 623, 656 to 692, 861 to 898, 983 to 1021, 1052 to 1089, 1161 to 1198, 1258 to 1295, 1302 to 1340, 1344 to 1383, 1492 to 1529, 1711 to 1748, and 1752 to 1789; these read LDLQAMIPYCVAALSDPAKKVRQAAADLITVLSKSNAE, LLQEIIVPALEESVLDEEHISNVLRSHLQSTKDSATG, DLTTNILNAFLESLQDIPKITTDSPATKRRRTSSSDHS, DTSVGHGDVLVQCIQKSSSPAVQNSALLLVASLANTAPD, QTIKEVIPPLVETFRKSRRNLVTSAAELLSSFVIAYEH, QPKPTLAATLFNRNTDDDQDLHKTALKELTLLPKVLSS, LSIGEFIKAVENLLDRPSISLRQKVLRTLEVRVDQESN, TVLLAFLPQLTAVIRDSDDIAYKHTAVACVDKIAEKYGK, EAVAAAATTIAGDCCLGQPDKRLRVMALLCLASLVDVLQD, SAVEEYLKLLATVLDKHPSTIIAKHISTLSTIFLSALD, DHRKELNAAVLRRLRSPSASVRLAAVRCEQSLTDTLGE, and EMLSEMLPYISELQDDDDEDVEKETHRWITKIEAILGE. The segment at 881-901 is disordered; the sequence is TTDSPATKRRRTSSSDHSRGV.

Belongs to the HEATR1/UTP10 family. As to quaternary structure, component of the ribosomal small subunit (SSU) processome.

Its subcellular location is the nucleus. It localises to the nucleolus. Involved in nucleolar processing of pre-18S ribosomal RNA. Involved in ribosome biosynthesis. In Pyricularia oryzae (strain 70-15 / ATCC MYA-4617 / FGSC 8958) (Rice blast fungus), this protein is U3 small nucleolar RNA-associated protein 10.